A 263-amino-acid chain; its full sequence is Oxygen-evolving enhancer protein 2, chloroplastic (263 aa).

The N-terminal 78 residues, 1–78, are a transit peptide targeting the chloroplast; that stretch reads MAAASCFHAL…VGTKVSPADA (78 aa). Over residues 14 to 30 the composition is skewed to low complexity; the sequence is ARSSSSSLQSSSSRLPA. The disordered stretch occupies residues 14–34; the sequence is ARSSSSSLQSSSSRLPAPIKP.

The protein belongs to the PsbP family.

It is found in the plastid. The protein localises to the chloroplast thylakoid membrane. Functionally, may be involved in the regulation of photosystem II. This chain is Oxygen-evolving enhancer protein 2, chloroplastic, found in Helianthus annuus (Common sunflower).